The sequence spans 671 residues: DNA ligase (671 aa).

NAD(+) is bound by residues 32–36, 81–82, and E113; these read DAEYD and SL. K115 acts as the N6-AMP-lysine intermediate in catalysis. Positions 136, 173, 290, and 314 each coordinate NAD(+). Residues C408, C411, C426, and C432 each coordinate Zn(2+). Residues 593-671 form the BRCT domain; sequence EIDSPFAGKT…EAEMLRLFGE (79 aa).

The protein belongs to the NAD-dependent DNA ligase family. LigA subfamily. The cofactor is Mg(2+). It depends on Mn(2+) as a cofactor.

The catalysed reaction is NAD(+) + (deoxyribonucleotide)n-3'-hydroxyl + 5'-phospho-(deoxyribonucleotide)m = (deoxyribonucleotide)n+m + AMP + beta-nicotinamide D-nucleotide.. Its function is as follows. DNA ligase that catalyzes the formation of phosphodiester linkages between 5'-phosphoryl and 3'-hydroxyl groups in double-stranded DNA using NAD as a coenzyme and as the energy source for the reaction. It is essential for DNA replication and repair of damaged DNA. The polypeptide is DNA ligase (Enterobacter sp. (strain 638)).